Consider the following 543-residue polypeptide: T-complex protein 1 subunit eta (543 aa).

M1 is modified (N-acetylmethionine). G41 lines the ADP pocket. Residue G41 coordinates ATP. K67 is subject to N6-acetyllysine. D92 contacts Mg(2+). Residues G93, T94, T95, S96, S164, and S165 each contribute to the ADP site. G93 is a binding site for ATP. S96 is an ATP binding site. K250 and K320 each carry N6-acetyllysine. ATP-binding residues include R398 and G409. G409 contacts ADP. K430 participates in a covalent cross-link: Glycyl lysine isopeptide (Lys-Gly) (interchain with G-Cter in SUMO2). 2 residues coordinate ADP: E494 and R499. R499 is an ATP binding site. A disordered region spans residues 524 to 543 (RSTVDASPAAGRGRGRGRLH). The residue at position 535 (R535) is an Omega-N-methylarginine.

This sequence belongs to the TCP-1 chaperonin family. In terms of assembly, component of the chaperonin-containing T-complex (TRiC), a hexadecamer composed of two identical back-to-back stacked rings enclosing a protein folding chamber. Each ring is made up of eight different subunits: TCP1/CCT1, CCT2, CCT3, CCT4, CCT5, CCT6A/CCT6, CCT7, CCT8. Interacts with PACRG. Interacts with DLEC1.

The protein resides in the cytoplasm. It catalyses the reaction ATP + H2O = ADP + phosphate + H(+). Component of the chaperonin-containing T-complex (TRiC), a molecular chaperone complex that assists the folding of actin, tubulin and other proteins upon ATP hydrolysis. The TRiC complex mediates the folding of WRAP53/TCAB1, thereby regulating telomere maintenance. The polypeptide is T-complex protein 1 subunit eta (CCT7) (Bos taurus (Bovine)).